The primary structure comprises 716 residues: Antibacterial effector protein Tle3 (716 aa).

The interval 68–87 (PTLPGGQANPGYLTPAGYSL) is disordered.

Interacts in the cytoplasm with the adapter protein Tla3. Interacts in the periplasm with the immunity protein Tli3.

It localises to the secreted. Its subcellular location is the host periplasm. Its activity is regulated as follows. Neutralized by the immunity protein Tli3 in the periplasm of P.aeruginosa cells. Functionally, antibacterial effector. Is toxic once delivered in the periplasm of prey bacteria. The polypeptide is Antibacterial effector protein Tle3 (Pseudomonas aeruginosa (strain ATCC 15692 / DSM 22644 / CIP 104116 / JCM 14847 / LMG 12228 / 1C / PRS 101 / PAO1)).